Here is a 457-residue protein sequence, read N- to C-terminus: Bifunctional protein GlmU (457 aa).

Residues 1-232 (MNNLAAVILA…PAEVMGINDR (232 aa)) are pyrophosphorylase. UDP-N-acetyl-alpha-D-glucosamine is bound by residues 9–12 (LAAG), lysine 23, glutamine 75, and 80–81 (GT). Residue aspartate 105 participates in Mg(2+) binding. Residues glycine 142, glutamate 157, asparagine 172, and asparagine 230 each contribute to the UDP-N-acetyl-alpha-D-glucosamine site. A Mg(2+)-binding site is contributed by asparagine 230. Positions 233–253 (AQLAEAGQLLRGRINKALMLD) are linker. The segment at 254–457 (GTTLIDPQTT…NKEGWKLKKK (204 aa)) is N-acetyltransferase. Positions 336 and 354 each coordinate UDP-N-acetyl-alpha-D-glucosamine. Residue histidine 366 is the Proton acceptor of the active site. 2 residues coordinate UDP-N-acetyl-alpha-D-glucosamine: tyrosine 369 and asparagine 380. Residues 389–390 (NY), serine 408, alanine 426, and arginine 443 each bind acetyl-CoA.

This sequence in the N-terminal section; belongs to the N-acetylglucosamine-1-phosphate uridyltransferase family. The protein in the C-terminal section; belongs to the transferase hexapeptide repeat family. Homotrimer. Mg(2+) is required as a cofactor.

Its subcellular location is the cytoplasm. The enzyme catalyses alpha-D-glucosamine 1-phosphate + acetyl-CoA = N-acetyl-alpha-D-glucosamine 1-phosphate + CoA + H(+). It carries out the reaction N-acetyl-alpha-D-glucosamine 1-phosphate + UTP + H(+) = UDP-N-acetyl-alpha-D-glucosamine + diphosphate. It functions in the pathway nucleotide-sugar biosynthesis; UDP-N-acetyl-alpha-D-glucosamine biosynthesis; N-acetyl-alpha-D-glucosamine 1-phosphate from alpha-D-glucosamine 6-phosphate (route II): step 2/2. The protein operates within nucleotide-sugar biosynthesis; UDP-N-acetyl-alpha-D-glucosamine biosynthesis; UDP-N-acetyl-alpha-D-glucosamine from N-acetyl-alpha-D-glucosamine 1-phosphate: step 1/1. Its pathway is bacterial outer membrane biogenesis; LPS lipid A biosynthesis. In terms of biological role, catalyzes the last two sequential reactions in the de novo biosynthetic pathway for UDP-N-acetylglucosamine (UDP-GlcNAc). The C-terminal domain catalyzes the transfer of acetyl group from acetyl coenzyme A to glucosamine-1-phosphate (GlcN-1-P) to produce N-acetylglucosamine-1-phosphate (GlcNAc-1-P), which is converted into UDP-GlcNAc by the transfer of uridine 5-monophosphate (from uridine 5-triphosphate), a reaction catalyzed by the N-terminal domain. The sequence is that of Bifunctional protein GlmU from Geotalea uraniireducens (strain Rf4) (Geobacter uraniireducens).